The following is a 376-amino-acid chain: MRLSVRKVLLAAGCALALVLAVQLGQQVLECRAVLGGTRNPRRMRPEQEELVMLGADHVEYRYGKAMPLIFVGGVPRSGTTLMRAMLDAHPEVRCGEETRIIPRVLAMRQAWTKSGREKLRLDEAGVTDEVLDAAMQAFILEVIAKHGEPARVLCNKDPFTLKSSVYLARLFPNSKFLLMVRDGRASVHSMITRKVTIAGFDLSSYRDCLTKWNKAIEVMYAQCMEVGRDKCLPVYYEQLVLHPRRSLKRILDFLGIAWSDTVLHHEDLIGKPGGVSLSKIERSTDQVIKPVNLEALSKWTGHIPRDVVRDMAQIAPMLARLGYDPYANPPNYGNPDPIVINNTHRVLKGDYKTPANLKGYFQVNQNSTSPHLGSS.

At 1 to 8 (MRLSVRKV) the chain is on the cytoplasmic side. A helical; Signal-anchor for type II membrane protein membrane pass occupies residues 9–25 (LLAAGCALALVLAVQLG). Residues 26-376 (QQVLECRAVL…NSTSPHLGSS (351 aa)) are Lumenal-facing. Residue 77 to 81 (RSGTT) coordinates 3'-phosphoadenylyl sulfate. A disulfide bridge links Cys95 with Cys155. The Proton donor/acceptor role is filled by Glu98. The segment at 100-104 (RIIPR) is interaction with peptide substrate. Residues Arg182, Ser190, and Arg194 each contribute to the 3'-phosphoadenylyl sulfate site. An intrachain disulfide couples Cys224 to Cys232. 3'-phosphoadenylyl sulfate-binding positions include Tyr237, 284-293 (STDQVIKPVN), and Lys299. Asn342 and Asn367 each carry an N-linked (GlcNAc...) asparagine glycan.

It belongs to the protein sulfotransferase family. In terms of assembly, homodimer. Can also form heterodimers with TPST1. In terms of processing, N-glycosylated. In terms of tissue distribution, widely expressed.

It is found in the golgi apparatus membrane. The catalysed reaction is L-tyrosyl-[protein] + 3'-phosphoadenylyl sulfate = O-sulfo-L-tyrosine-[protein] + adenosine 3',5'-bisphosphate + H(+). Its function is as follows. Catalyzes the O-sulfation of tyrosine residues within acidic motifs of polypeptides, using 3'-phosphoadenylyl sulfate (PAPS) as cosubstrate. The polypeptide is Protein-tyrosine sulfotransferase 2 (Tpst2) (Mus musculus (Mouse)).